A 499-amino-acid polypeptide reads, in one-letter code: Transcriptional regulator sdnM (499 aa).

The protein resides in the nucleus. It participates in antibiotic biosynthesis. Transcriptional regulator; part of the gene cluster that mediates the biosynthesis of sordarin and hypoxysordarin, glycoside antibiotics with a unique tetracyclic diterpene aglycone structure. First, the geranylgeranyl diphosphate synthase sdnC constructs GGDP from farnesyl diphosphate and isopentenyl diphosphate. The diterpene cyclase sdnA then catalyzes the cyclization of GGDP to afford cycloaraneosene. Cycloaraneosene is then hydroxylated four times by the putative cytochrome P450 monooxygenases sdnB, sdnE, sdnF and sdnH to give a hydroxylated cycloaraneosene derivative such as cycloaraneosene-8,9,13,19-tetraol. Although the order of the hydroxylations is unclear, at least C8, C9 and C13 of the cycloaraneosene skeleton are hydroxylated before the sordaricin formation. Dehydration of the 13-hydroxy group of the hydroxylated cycloaraneosene derivative might be catalyzed by an unassigned hypothetical protein such as sdnG and sdnP to construct the cyclopentadiene moiety. The FAD-dependent oxidoreductase sdnN is proposed to catalyze the oxidation at C9 of the hydroxylated cycloaraneosene derivative and also catalyze the Baeyer-Villiger oxidation to give the lactone intermediate. The presumed lactone intermediate would be hydrolyzed to give an acrolein moiety and a carboxylate moiety. Then, [4+2]cycloaddition would occur between the acrolein moiety and the cyclopentadiene moiety to give sordaricin. SdnN might also be involved in the [4+2]cycloaddition after the hypothesized oxidation to accommodate the oxidized product and prompt the [4+2]cycloaddition. GDP-6-deoxy-D-altrose may be biosynthesized from GDP-D-mannose by the putative GDP-mannose-4,6-dehydratase sdnI and the short-chain dehydrogenase sdnK. The glycosyltransferase sdnJ catalyzes the attachment of 6-deoxy-D-altrose onto the 19-hydroxy group of sordaricin to give 4'-O-demethylsordarin. The methyltransferase sdnD would complete the biosynthesis of sordarin. Sordarin can be further modified into hypoxysordarin. The unique acyl chain at the 3'-hydroxy group of hypoxysordarin would be constructed by an iterative type I PKS sdnO and the trans-acting polyketide methyltransferase sdnL. SdnL would be responsible for the introduction of an alpha-methyl group of the polyketide chain. Alternatively, the beta-lactamase-like protein sdnR might be responsible for the cleavage and transfer of the polyketide chain from the PKS sdnO to sordarin. Two putative cytochrome P450 monooxygenases, sdnQ and sdnT, might catalyze the epoxidations of the polyketide chain to complete the biosynthesis of hypoxysordarin. Transcriptional regulators sdnM and sdnS are presumably encoded for the transcriptional regulation of the expression of the sdn gene cluster. The protein is Transcriptional regulator sdnM of Sordaria araneosa (Pleurage araneosa).